The sequence spans 425 residues: Serine--tRNA ligase (425 aa).

229–231 (TAE) is an L-serine binding site. An ATP-binding site is contributed by 260-262 (RSE). Glu-283 is a binding site for L-serine. 347 to 350 (EISS) contacts ATP. An L-serine-binding site is contributed by Ser-384.

This sequence belongs to the class-II aminoacyl-tRNA synthetase family. Type-1 seryl-tRNA synthetase subfamily. As to quaternary structure, homodimer. The tRNA molecule binds across the dimer.

It localises to the cytoplasm. The enzyme catalyses tRNA(Ser) + L-serine + ATP = L-seryl-tRNA(Ser) + AMP + diphosphate + H(+). It carries out the reaction tRNA(Sec) + L-serine + ATP = L-seryl-tRNA(Sec) + AMP + diphosphate + H(+). The protein operates within aminoacyl-tRNA biosynthesis; selenocysteinyl-tRNA(Sec) biosynthesis; L-seryl-tRNA(Sec) from L-serine and tRNA(Sec): step 1/1. Catalyzes the attachment of serine to tRNA(Ser). Is also able to aminoacylate tRNA(Sec) with serine, to form the misacylated tRNA L-seryl-tRNA(Sec), which will be further converted into selenocysteinyl-tRNA(Sec). This Rhizorhabdus wittichii (strain DSM 6014 / CCUG 31198 / JCM 15750 / NBRC 105917 / EY 4224 / RW1) (Sphingomonas wittichii) protein is Serine--tRNA ligase.